A 187-amino-acid polypeptide reads, in one-letter code: Shikimate kinase (187 aa).

Residue 14 to 19 (TSGKST) coordinates ATP. Position 18 (Ser-18) interacts with Mg(2+). Substrate is bound by residues Asp-36, Arg-60, and Gly-82. Residue Arg-120 participates in ATP binding. Arg-147 lines the substrate pocket.

This sequence belongs to the shikimate kinase family. As to quaternary structure, monomer. Mg(2+) serves as cofactor.

It is found in the cytoplasm. The catalysed reaction is shikimate + ATP = 3-phosphoshikimate + ADP + H(+). The protein operates within metabolic intermediate biosynthesis; chorismate biosynthesis; chorismate from D-erythrose 4-phosphate and phosphoenolpyruvate: step 5/7. Catalyzes the specific phosphorylation of the 3-hydroxyl group of shikimic acid using ATP as a cosubstrate. The chain is Shikimate kinase from Chloroherpeton thalassium (strain ATCC 35110 / GB-78).